A 208-amino-acid chain; its full sequence is Small ribosomal subunit protein eS8 (208 aa).

Residues 1–40 form a disordered region; the sequence is MGISRDNWHKRRKTGGKRKPVHKKRKYELGRPPSNTKLGP. Basic residues predominate over residues 8 to 26; that stretch reads WHKRRKTGGKRKPVHKKRK.

It belongs to the eukaryotic ribosomal protein eS8 family. As to quaternary structure, component of the small ribosomal subunit.

The protein localises to the cytoplasm. Its function is as follows. Component of the small ribosomal subunit. The ribosome is a large ribonucleoprotein complex responsible for the synthesis of proteins in the cell. This chain is Small ribosomal subunit protein eS8 (rps8), found in Ictalurus punctatus (Channel catfish).